The following is a 285-amino-acid chain: MSIYLIALLPVLGWGFMPIIANLRKSTPEEQLLGTSISALLFALILFWILSPEITVLSFIVSFISGIFWSFGQLLQFKGIAASSVAKAMPISNGTQLVGATLFAVLVFREWQTVTAVIIGVVAVILILIGVVMTGFQKRGNHITESVSFHVYGIVILSSFFLTLYVVTNQLFDVTGFSIILPQAIGMLTCAIGINLAKKTAISRKNVTFNLMTGLSWSIANLGMFLATAVLGVATSFSISQACVIVATIGGILIFKQKKSPLEWTFILSGILLIMVGVVFLSLLK.

The next 9 membrane-spanning stretches (helical) occupy residues 2-21 (SIYL…PIIA), 31-50 (QLLG…FWIL), 55-77 (TVLS…LLQF), 111-133 (WQTV…GVVM), 146-168 (SVSF…YVVT), 172-194 (FDVT…AIGI), 207-229 (VTFN…LATA), 233-255 (VATS…ILIF), and 262-284 (LEWT…LSLL).

It belongs to the GRP transporter (TC 2.A.7.5) family.

It localises to the cell membrane. The protein is Putative sugar uptake protein lmo0424 of Listeria monocytogenes serovar 1/2a (strain ATCC BAA-679 / EGD-e).